Reading from the N-terminus, the 144-residue chain is MLKGIHPALSPELLKTLAEMGHGDEIVLADAHFPAHSLHKNVIRADGISIDILLEAITPLFEFDAYVDAPLLMMKAVEGDSLDPNVETRYLNAIESAVGFTPNLTSLERFDFYTRAKQAYAVVVSGEIAKYGNIIIKKGVTPIL.

H22 functions as the Proton donor in the catalytic mechanism. Residues D30, R109, and 131–133 (YGN) contribute to the substrate site.

The protein belongs to the RbsD / FucU family. FucU mutarotase subfamily. Homodecamer.

It is found in the cytoplasm. It catalyses the reaction alpha-L-fucose = beta-L-fucose. The protein operates within carbohydrate metabolism; L-fucose metabolism. Functionally, involved in the anomeric conversion of L-fucose. This chain is L-fucose mutarotase, found in Haemophilus influenzae (strain 86-028NP).